The primary structure comprises 159 residues: Small ribosomal subunit protein uS7m (159 aa).

The protein belongs to the universal ribosomal protein uS7 family. In terms of assembly, part of the small ribosomal subunit.

It localises to the mitochondrion. In terms of biological role, one of the primary rRNA binding proteins, it binds directly to the small rRNA where it nucleates assembly of the head domain of the small subunit. The polypeptide is Small ribosomal subunit protein uS7m (RPS7) (Reclinomonas americana).